Here is a 442-residue protein sequence, read N- to C-terminus: Mimosinase, chloroplastic (442 aa).

The transit peptide at Met-1–Cys-35 directs the protein to the chloroplast. Residues Tyr-103, Arg-105, Gly-133, Met-134, Ser-252, and Thr-254 each contribute to the pyridoxal 5'-phosphate site. Lys-255 carries the N6-(pyridoxal phosphate)lysine modification.

The protein belongs to the trans-sulfuration enzymes family. Forms homodimers. May form homotetramers from two homodimers. The cofactor is pyridoxal 5'-phosphate.

The protein resides in the plastid. It localises to the chloroplast. It catalyses the reaction L-mimosine + H2O = 3-hydroxy-4H-pyrid-4-one + pyruvate + NH4(+). The enzyme catalyses L,L-cystathionine + H2O = L-homocysteine + pyruvate + NH4(+). The catalysed reaction is an S-substituted L-cysteine + H2O = a thiol + pyruvate + NH4(+). Catalyzes the degradation of mimosine, which is a toxic secondary metabolite found in all Mimosa and Leucaena species. Catalyzes the degradation of cystathionine, but seems to have lower preference toward cystathionine over mimosine. The polypeptide is Mimosinase, chloroplastic (Mimosa pudica (Sensitive plant)).